Reading from the N-terminus, the 34-residue chain is Photosystem I reaction center subunit XII (34 aa).

The helical transmembrane segment at 5-25 (ISSPEIFIALVVAAHAAILAL) threads the bilayer.

It belongs to the PsaM family.

Its subcellular location is the cellular thylakoid membrane. The protein is Photosystem I reaction center subunit XII of Synechococcus sp. (strain CC9902).